The sequence spans 90 residues: Nodulation protein NolS (90 aa).

In terms of biological role, involved in nodulation of a particular host, M.lupulina. This is Nodulation protein NolS (nolS) from Sinorhizobium meliloti (strain Sm2011 / Rm2011 / 2011).